A 316-amino-acid polypeptide reads, in one-letter code: Formimidoylglutamase (316 aa).

Residues His127, Asp156, His158, Asp160, Asp247, and Asp249 each coordinate Mn(2+).

Belongs to the arginase family. It depends on Mn(2+) as a cofactor.

The enzyme catalyses N-formimidoyl-L-glutamate + H2O = formamide + L-glutamate. It participates in amino-acid degradation; L-histidine degradation into L-glutamate; L-glutamate from N-formimidoyl-L-glutamate (hydrolase route): step 1/1. Catalyzes the conversion of N-formimidoyl-L-glutamate to L-glutamate and formamide. The sequence is that of Formimidoylglutamase from Cupriavidus pinatubonensis (strain JMP 134 / LMG 1197) (Cupriavidus necator (strain JMP 134)).